The sequence spans 1137 residues: Calcium-activated potassium channel subunit alpha-1 (1137 aa).

Residues 1-44 (MSNNINANNLNTDSSSSPVNVPKMDALIIPVTMEVPCDSRGQRM) lie on the Extracellular side of the membrane. The chain crosses the membrane as a helical span at residues 45-65 (WWAFLASSMVTFFGGLFIILL). Residues 66-137 (WRTLKYLWTV…MISAQTLTGR (72 aa)) lie on the Cytoplasmic side of the membrane. A helical membrane pass occupies residues 138 to 158 (VLVVLVFALSIGALVIYFIDS). Residues 159 to 173 (SNPIESCQNFYKDFT) are Extracellular-facing. The helical transmembrane segment at 174-194 (LQIDMAFNVFFLLYFGLRFIA) threads the bilayer. Over 195–198 (ANDK) the chain is Cytoplasmic. Residues 199-219 (LWFWLEVNSVVDFFTVPPVFV) form a helical membrane-spanning segment. Topologically, residues 220–223 (SVYL) are extracellular. The chain crosses the membrane as a helical; Voltage-sensor span at residues 224-244 (NRSWLGLRFLRALRLIQFSEI). At 245–259 (LQFLNILKTSNSIKL) the chain is on the cytoplasmic side. A helical membrane pass occupies residues 260–280 (VNLCSIFISTWLTAAGFIHLV). At 281-294 (ENSGDPWENFQNNQ) the chain is on the extracellular side. Residues 295–317 (QLTYWECVYLLMVTMSTVGYGDV) constitute an intramembrane region (pore-forming). Positions 311-314 (TVGY) match the Selectivity for potassium motif. The Extracellular segment spans residues 318-326 (YAKTTLGRL). The chain crosses the membrane as a helical span at residues 327-347 (FMVFFILGGLAMFASYVPEII). Residues 348–1137 (ELIGNRKKYG…KQKYVQEDRL (790 aa)) are Cytoplasmic-facing. The RCK N-terminal 1 domain occupies 366-508 (RKHIVVCGHI…WNWKEGDDAI (143 aa)). Mg(2+) contacts are provided by Glu398, Gln421, and Glu423. A segment S7 region spans residues 515–535 (LGFIAQSCLAPGLSTMLANLF). The interval 572 to 592 (LSFPAVCELVFAKLKLLMIAI) is segment S8. The segment at 636–640 (CKACH) is heme-binding motif. Positions 660–688 (EQPSTLSPKKKQRNGGMRNSPNSSPKLMR) are disordered. The interval 738-758 (VLSGHVVVCIFGDVKSALIGL) is segment S9. Residues 740–884 (SGHVVVCIFG…MDRSSPDNSP (145 aa)) enclose the RCK N-terminal 2 domain. Residues 904 to 926 (TELVNDSNVQFLDQDDDDDPDTE) carry the Calcium bowl motif. Ca(2+)-binding residues include Gln913, Asp916, Asp919, and Asp921. Residues 933 to 953 (FACGTAFAVSVLDSLMSATYF) are segment S10. A compositionally biased stretch (low complexity) spans 1088–1112 (ASLSHSSHSSYSSSKKSSSVHSIPS). The segment at 1088-1137 (ASLSHSSHSSYSSSKKSSSVHSIPSTANRPNRTKTRDSREKQKYVQEDRL) is disordered. Basic and acidic residues predominate over residues 1121-1137 (KTRDSREKQKYVQEDRL).

Belongs to the potassium channel family. Calcium-activated (TC 1.A.1.3) subfamily. KCa1.1/KCNMA1 sub-subfamily. As to quaternary structure, homotetramer; which constitutes the calcium-activated potassium channel.

It is found in the cell membrane. It carries out the reaction K(+)(in) = K(+)(out). Its activity is regulated as follows. Ethanol and carbon monoxide-bound heme increase channel activation. Heme inhibits channel activation. Potassium channel activated by both membrane depolarization or increase in cytosolic Ca(2+) that mediates export of K(+). It is also activated by the concentration of cytosolic Mg(2+). Its activation dampens the excitatory events that elevate the cytosolic Ca(2+) concentration and/or depolarize the cell membrane. It therefore contributes to repolarization of the membrane potential. Plays a key role in controlling excitability in a number of systems, such as regulation of the contraction of smooth muscle, the tuning of hair cells in the cochlea, regulation of transmitter release, and innate immunity. In smooth muscles, its activation by high level of Ca(2+), caused by ryanodine receptors in the sarcoplasmic reticulum, regulates the membrane potential. In cochlea cells, its number and kinetic properties partly determine the characteristic frequency of each hair cell and thereby helps to establish a tonotopic map. Highly sensitive to both iberiotoxin (IbTx) and charybdotoxin (CTX). The chain is Calcium-activated potassium channel subunit alpha-1 (KCNMA1) from Gallus gallus (Chicken).